Reading from the N-terminus, the 623-residue chain is DEAD-box ATP-dependent RNA helicase 52C (623 aa).

A disordered region spans residues 1-120; the sequence is MATPSRTSWA…DGDAAAGAGD (120 aa). The span at 10 to 29 shows a compositional bias: low complexity; that stretch reads ADVADADPAPAPAPAANGPA. Over residues 54–69 the composition is skewed to pro residues; sequence APPPSSSSSSAPPPRA. Residues 70–83 show a composition bias toward low complexity; that stretch reads APGLLAPRPAAAGM. The span at 84–97 shows a compositional bias: gly residues; sequence GRMGGGGGGGGFGG. The Q motif motif lies at 155–183; the sequence is GTFAEIDLGQALNDNIRRCKYVRPTPVQR. The 187-residue stretch at 186–372 folds into the Helicase ATP-binding domain; that stretch reads IPISLAGRDL…SDFLENYIFL (187 aa). Residue 199-206 participates in ATP binding; sequence AQTGSGKT. Residues 316–319 carry the DEAD box motif; the sequence is DEAD. In terms of domain architecture, Helicase C-terminal spans 399-550; sequence HLMDLLHAQR…EVPAWLSRYA (152 aa). The disordered stretch occupies residues 553–595; that stretch reads PSYGGGGGRNRRSGGGSRFGGRDFRRDSSSGRGGGDYYGGGSS. A compositionally biased stretch (gly residues) spans 555 to 571; it reads YGGGGGRNRRSGGGSRF. A compositionally biased stretch (basic and acidic residues) spans 572 to 581; sequence GGRDFRRDSS. Positions 583 to 595 are enriched in gly residues; it reads GRGGGDYYGGGSS.

Belongs to the DEAD box helicase family. DDX3/DED1 subfamily.

The enzyme catalyses ATP + H2O = ADP + phosphate + H(+). In Oryza sativa subsp. japonica (Rice), this protein is DEAD-box ATP-dependent RNA helicase 52C.